The primary structure comprises 166 residues: Specificity protein transcription factor 2 (166 aa).

Residues 17–45 (SYHHSLPSISPPDSPASTSASSSSSSIGA) are disordered. The segment covering 31–42 (PASTSASSSSSS) has biased composition (low complexity). 3 consecutive C2H2-type zinc fingers follow at residues 77 to 101 (HLCS…LRKH), 107 to 131 (FVCD…KRTH), and 137 to 160 (FACK…TSVH).

This sequence belongs to the Sp1 C2H2-type zinc-finger protein family.

Its function is as follows. Transcription factor. Probably acts downstream of the Wnt signaling pathway. The polypeptide is Specificity protein transcription factor 2 (Caenorhabditis elegans).